A 345-amino-acid chain; its full sequence is MNILGIETSCDETSAAVVQNGRVISNIISSQLIHRDFGGVVPELASREHERLIVSVVDAAVNEANIQKNDLDIIAATAGPGLIGAVMVGLCFAQGMAYALKKPLVPVNHIEAHIFSAFIRDDSDAPPPENDFISLTVSGGHTMLCIVNQDLSYKVIGRTIDDAAGEAFDKTGKMLGLDYPAGPVIDRLAKEGNPKFHHFPRALTAQSRTSKSYRDNFDFSFSGLKTSVLQYISTHDSAYIERHLSDIAASVQEAITSVLVMKTIAAAEKYGIDAISVAGGVSANSRLRHSMQEACDRQGIRLFIPGIVYSTDNAAMIATMANLKLERGKTEPNNYDVAPFASFRG.

Fe cation-binding residues include His109 and His113. Substrate-binding positions include 136 to 140 (TVSGG), Asp169, Gly182, Asp186, and Asn284. Asp312 serves as a coordination point for Fe cation.

This sequence belongs to the KAE1 / TsaD family. Requires Fe(2+) as cofactor.

The protein resides in the cytoplasm. The enzyme catalyses L-threonylcarbamoyladenylate + adenosine(37) in tRNA = N(6)-L-threonylcarbamoyladenosine(37) in tRNA + AMP + H(+). Functionally, required for the formation of a threonylcarbamoyl group on adenosine at position 37 (t(6)A37) in tRNAs that read codons beginning with adenine. Is involved in the transfer of the threonylcarbamoyl moiety of threonylcarbamoyl-AMP (TC-AMP) to the N6 group of A37, together with TsaE and TsaB. TsaD likely plays a direct catalytic role in this reaction. The protein is tRNA N6-adenosine threonylcarbamoyltransferase of Prosthecochloris aestuarii (strain DSM 271 / SK 413).